A 322-amino-acid polypeptide reads, in one-letter code: Protease HtpX homolog (322 aa).

Transmembrane regions (helical) follow at residues 19-39 (ILLI…CYLL) and 61-81 (FINL…IAYF). Zn(2+) is bound at residue His165. Glu166 is an active-site residue. Zn(2+) is bound at residue His169. A run of 2 helical transmembrane segments spans residues 175-195 (VRLL…AQIA) and 216-236 (ILIL…ATLM). Zn(2+) is bound at residue Glu245.

Belongs to the peptidase M48B family. Requires Zn(2+) as cofactor.

The protein resides in the cell inner membrane. This chain is Protease HtpX homolog, found in Bacteroides fragilis (strain YCH46).